Reading from the N-terminus, the 260-residue chain is Thaumatin-like protein 1 (260 aa).

A signal peptide spans 1–32 (MIITVLHSHVSFYFIILSFLFFHALHLVGSDG). Disulfide bonds link Cys-41–Cys-255, Cys-89–Cys-100, Cys-105–Cys-112, Cys-166–Cys-245, Cys-171–Cys-228, Cys-179–Cys-191, Cys-195–Cys-204, and Cys-205–Cys-215.

This sequence belongs to the thaumatin family. As to expression, expressed only in roots.

Functionally, involved in local responses of roots to colonization by non-pathogenic plant growth-promoting rhizobacteria (PGPR) fluorescent Pseudomonas spp., but seems to not being required for the establishment of subsequent induced systemic resistance (ISR). This chain is Thaumatin-like protein 1, found in Arabidopsis thaliana (Mouse-ear cress).